Here is a 57-residue protein sequence, read N- to C-terminus: MAVPKRRKSRSNTRSRRSQWKAAKTELVGVTVAGHAHKVPRRLLKAARLGLIDFDKR.

Residues 1-19 show a composition bias toward basic residues; sequence MAVPKRRKSRSNTRSRRSQ. Residues 1 to 22 form a disordered region; the sequence is MAVPKRRKSRSNTRSRRSQWKA.

It belongs to the bacterial ribosomal protein bL32 family.

The sequence is that of Large ribosomal subunit protein bL32 from Mycobacterium tuberculosis (strain ATCC 25177 / H37Ra).